A 78-amino-acid chain; its full sequence is Small ribosomal subunit protein bS16c (78 aa).

This sequence belongs to the bacterial ribosomal protein bS16 family.

It localises to the plastid. The protein localises to the chloroplast. This chain is Small ribosomal subunit protein bS16c, found in Amborella trichopoda.